A 55-amino-acid polypeptide reads, in one-letter code: Large ribosomal subunit protein bL33 (55 aa).

Belongs to the bacterial ribosomal protein bL33 family.

The sequence is that of Large ribosomal subunit protein bL33 from Deinococcus deserti (strain DSM 17065 / CIP 109153 / LMG 22923 / VCD115).